A 287-amino-acid polypeptide reads, in one-letter code: Ribonuclease Z (287 aa).

The Zn(2+) site is built by H64, H66, D68, H69, H124, D191, and H250. Catalysis depends on D68, which acts as the Proton acceptor.

Belongs to the RNase Z family. As to quaternary structure, homodimer. Zn(2+) is required as a cofactor.

It carries out the reaction Endonucleolytic cleavage of RNA, removing extra 3' nucleotides from tRNA precursor, generating 3' termini of tRNAs. A 3'-hydroxy group is left at the tRNA terminus and a 5'-phosphoryl group is left at the trailer molecule.. Functionally, zinc phosphodiesterase, which displays some tRNA 3'-processing endonuclease activity. Probably involved in tRNA maturation, by removing a 3'-trailer from precursor tRNA. The protein is Ribonuclease Z of Pyrobaculum neutrophilum (strain DSM 2338 / JCM 9278 / NBRC 100436 / V24Sta) (Thermoproteus neutrophilus).